A 474-amino-acid polypeptide reads, in one-letter code: L-arabinose isomerase (474 aa).

Residues Glu306, Glu331, His348, and His447 each contribute to the Mn(2+) site.

The protein belongs to the arabinose isomerase family. It depends on Mn(2+) as a cofactor.

It carries out the reaction beta-L-arabinopyranose = L-ribulose. It functions in the pathway carbohydrate degradation; L-arabinose degradation via L-ribulose; D-xylulose 5-phosphate from L-arabinose (bacterial route): step 1/3. Its function is as follows. Catalyzes the conversion of L-arabinose to L-ribulose. This is L-arabinose isomerase from Pediococcus pentosaceus (strain ATCC 25745 / CCUG 21536 / LMG 10740 / 183-1w).